A 388-amino-acid chain; its full sequence is Yellow-related salivary protein SP03 (388 aa).

An N-terminal signal peptide occupies residues 1 to 18 (MKIFLCLIAVVSLQGVLA). An N-linked (GlcNAc...) asparagine glycan is attached at N29.

It belongs to the major royal jelly protein family. As to expression, female salivary gland (at protein level).

The protein resides in the secreted. Functionally, probably modulates blood feeding of sand flies on vertebrate species by binding and sequestering different mediators involved in the host response. Binds biogenic amines. Binds noradrenaline with medium affinity. Binds octopamine with low affinity. Poorly binds histamine, adrenaline and serotonin. This chain is Yellow-related salivary protein SP03, found in Phlebotomus perniciosus (Phlebotomine sand fly).